The primary structure comprises 372 residues: Putative neuropeptide precursor protein (372 aa).

The signal sequence occupies residues 1–17 (MLLFSLTAITAVLAVSA). 2 disordered regions span residues 18–89 (VPTP…SNGE) and 136–208 (VTKS…KRDS). The span at 19-31 (PTPSNNKDGSTIS) shows a compositional bias: polar residues. Basic and acidic residues predominate over residues 38–57 (DQTKDDNRSLFLNKSDKNDL). Over residues 72 to 89 (GYDQTVDQRFDSPQSNGE) the composition is skewed to polar residues. Residues 177–191 (GGAAASAKTATKNSG) are compositionally biased toward low complexity.

Post-translationally, may be proteolytically processed to give rise to a number of active peptides. Detected in the brain and frontal ganglion and in the axons connecting to the corpus cardiacum and corpus allatum (at protein level). Detected in the brain-subesophageal ganglion (brain-SG) complex, fat body, midgut and ovary. Expression in the brain-SG complex is 2-3 times higher than in the other tissues.

The protein resides in the cytoplasm. Its subcellular location is the secreted. The protein is Putative neuropeptide precursor protein of Bombyx mori (Silk moth).